An 83-amino-acid chain; its full sequence is Small ribosomal subunit protein eS21 (83 aa).

Position 1 is an N-acetylmethionine (Met-1). Lys-41 is covalently cross-linked (Glycyl lysine isopeptide (Lys-Gly) (interchain with G-Cter in SUMO2)).

Belongs to the eukaryotic ribosomal protein eS21 family. As to quaternary structure, component of the 40S small ribosomal subunit.

The protein resides in the cytoplasm. The protein localises to the cytosol. It is found in the rough endoplasmic reticulum. Component of the small ribosomal subunit. The ribosome is a large ribonucleoprotein complex responsible for the synthesis of proteins in the cell. This Oryctolagus cuniculus (Rabbit) protein is Small ribosomal subunit protein eS21 (RPS21).